Here is a 904-residue protein sequence, read N- to C-terminus: HTH-type transcriptional regulator MalT (904 aa).

Position 39-46 (39-46) interacts with ATP; the sequence is CPAGYGKT. The HTH luxR-type domain occupies 832–897; the sequence is ELIRTSPLTQ…EAVQQAQQLL (66 aa). The H-T-H motif DNA-binding region spans 856 to 875; it reads NDQIAGELAVAATTIKTHIR.

The protein belongs to the MalT family. As to quaternary structure, monomer in solution. Oligomerizes to an active state in the presence of the positive effectors ATP and maltotriose.

Activated by ATP and maltotriose, which are both required for DNA binding. Functionally, positively regulates the transcription of the maltose regulon whose gene products are responsible for uptake and catabolism of malto-oligosaccharides. Specifically binds to the promoter region of its target genes, recognizing a short DNA motif called the MalT box. This is HTH-type transcriptional regulator MalT from Serratia proteamaculans (strain 568).